We begin with the raw amino-acid sequence, 227 residues long: Cytochrome c oxidase subunit 2 (227 aa).

Residues Met1–Ser14 are Mitochondrial intermembrane-facing. Residues Pro15–Met45 traverse the membrane as a helical segment. Topologically, residues Leu46 to Gln59 are mitochondrial matrix. The helical transmembrane segment at Glu60–Met87 threads the bilayer. Topologically, residues Asp88–Ser227 are mitochondrial intermembrane. Residues His161, Cys196, Glu198, Cys200, His204, and Met207 each coordinate Cu cation. Position 198 (Glu198) interacts with Mg(2+).

Belongs to the cytochrome c oxidase subunit 2 family. As to quaternary structure, component of the cytochrome c oxidase (complex IV, CIV), a multisubunit enzyme composed of 14 subunits. The complex is composed of a catalytic core of 3 subunits MT-CO1, MT-CO2 and MT-CO3, encoded in the mitochondrial DNA, and 11 supernumerary subunits COX4I, COX5A, COX5B, COX6A, COX6B, COX6C, COX7A, COX7B, COX7C, COX8 and NDUFA4, which are encoded in the nuclear genome. The complex exists as a monomer or a dimer and forms supercomplexes (SCs) in the inner mitochondrial membrane with NADH-ubiquinone oxidoreductase (complex I, CI) and ubiquinol-cytochrome c oxidoreductase (cytochrome b-c1 complex, complex III, CIII), resulting in different assemblies (supercomplex SCI(1)III(2)IV(1) and megacomplex MCI(2)III(2)IV(2)). Found in a complex with TMEM177, COA6, COX18, COX20, SCO1 and SCO2. Interacts with TMEM177 in a COX20-dependent manner. Interacts with COX20. Interacts with COX16. Requires Cu cation as cofactor.

The protein localises to the mitochondrion inner membrane. The catalysed reaction is 4 Fe(II)-[cytochrome c] + O2 + 8 H(+)(in) = 4 Fe(III)-[cytochrome c] + 2 H2O + 4 H(+)(out). Functionally, component of the cytochrome c oxidase, the last enzyme in the mitochondrial electron transport chain which drives oxidative phosphorylation. The respiratory chain contains 3 multisubunit complexes succinate dehydrogenase (complex II, CII), ubiquinol-cytochrome c oxidoreductase (cytochrome b-c1 complex, complex III, CIII) and cytochrome c oxidase (complex IV, CIV), that cooperate to transfer electrons derived from NADH and succinate to molecular oxygen, creating an electrochemical gradient over the inner membrane that drives transmembrane transport and the ATP synthase. Cytochrome c oxidase is the component of the respiratory chain that catalyzes the reduction of oxygen to water. Electrons originating from reduced cytochrome c in the intermembrane space (IMS) are transferred via the dinuclear copper A center (CU(A)) of subunit 2 and heme A of subunit 1 to the active site in subunit 1, a binuclear center (BNC) formed by heme A3 and copper B (CU(B)). The BNC reduces molecular oxygen to 2 water molecules using 4 electrons from cytochrome c in the IMS and 4 protons from the mitochondrial matrix. The protein is Cytochrome c oxidase subunit 2 (MT-CO2) of Gerbilliscus robustus (Fringe-tailed gerbil).